The sequence spans 367 residues: Cytochrome-c peroxidase IdrP2 (367 aa).

Positions 1–28 (MTTHQSIRRLSRIAALVGLAFVAGTVAA) are cleaved as a signal peptide. 2 Cytochrome c domains span residues 47–157 (DMVE…AMWQ) and 200–345 (SQQK…EALS). Positions 69, 72, 73, 215, 218, and 219 each coordinate heme c.

In terms of assembly, the iodate reductase (Idr) complex is composed of a molybdopterin-dependent iodate reductase (IdrA and IdrB subunits) and two associated peroxidases (IdrP1 and IdrP2). Heme c is required as a cofactor.

Its subcellular location is the periplasm. It catalyses the reaction 2 Fe(II)-[cytochrome c] + H2O2 + 2 H(+) = 2 Fe(III)-[cytochrome c] + 2 H2O. Involved in iodate respiration. May play a critical role in detoxification of inadvertent H(2)O(2) generated by the iodate reductase IdrA/IdrB. The sequence is that of Cytochrome-c peroxidase IdrP2 from Denitromonas iodatirespirans.